A 723-amino-acid polypeptide reads, in one-letter code: Homeobox protein HAT3.1 (723 aa).

Over residues 1 to 10 (MYKAVSKRVT) the composition is skewed to basic residues. 2 disordered regions span residues 1–94 (MYKA…GSHR) and 135–173 (KRAQ…QVRE). The span at 11-23 (RSSGSGLKQTNVD) shows a compositional bias: polar residues. Basic and acidic residues predominate over residues 58–83 (LHHEIMDHGKGNEEQKPTPQTVKKDS). Residues 265–322 (DIFCAKCGSKDLSVDNDIILCDGFCDRGFHQYCLEPPLRKEDIPPDDEGWLCPGCDCK) form a PHD-type zinc finger. Disordered regions lie at residues 357-628 (GGQN…KTQR) and 680-723 (VEKL…RRRK). Residues 365–407 (LPSDDSDDEEYDPDCLNDNENDEDGSDDNEESENEDGSSDETE) show a composition bias toward acidic residues. Basic and acidic residues predominate over residues 417–427 (ESFKEGKDIMK). Acidic residues predominate over residues 435–453 (DDSEDDDYDPDAPTCDDDK). 2 stretches are compositionally biased toward basic and acidic residues: residues 518–530 (RNVE…KLYD) and 547–556 (DKTARMGKED). Residues 580–589 (KKLIRKSKRA) are compositionally biased toward basic residues. The homeobox DNA-binding region spans 614-673 (SSSSACKQTDPKTQRLYISFQENQYPDKATKESLAKELQMTVKQVNNWFKHRRWSINSKP). Basic and acidic residues predominate over residues 680–690 (VEKLKTGKEGE). Residues 695–705 (VAGSSKQTMET) show a composition bias toward polar residues.

The protein belongs to the PHD-associated homeobox family. As to expression, primarily detected in root tissue.

It localises to the nucleus. Its function is as follows. Binds only to large DNA fragments. Recognizes a DNA fragment carrying 8 copies of box7 motif of the light-induced cab-E promoter of Nicotiana plumbaginifolia. Also recognizes the box7m1 motif. This is Homeobox protein HAT3.1 (HAT3.1) from Arabidopsis thaliana (Mouse-ear cress).